The sequence spans 122 residues: Large ribosomal subunit protein uL14 (122 aa).

The protein belongs to the universal ribosomal protein uL14 family. Part of the 50S ribosomal subunit. Forms a cluster with proteins L3 and L19. In the 70S ribosome, L14 and L19 interact and together make contacts with the 16S rRNA in bridges B5 and B8.

Binds to 23S rRNA. Forms part of two intersubunit bridges in the 70S ribosome. This is Large ribosomal subunit protein uL14 from Caldicellulosiruptor saccharolyticus (strain ATCC 43494 / DSM 8903 / Tp8T 6331).